The following is a 646-amino-acid chain: Long-chain fatty acid transport protein 1 (646 aa).

The Extracellular segment spans residues 1-13; sequence MRTPGAGTASVAS. A helical membrane pass occupies residues 14–34; it reads LGLLWLLGLPWTWSAAAAFGV. At 35-646 the chain is on the cytoplasmic side; that stretch reads YVGSGGWRFL…ARICAGDFSL (612 aa). Residues 191–475 are sufficient for oligomerization; the sequence is EVSEQLGKSL…YVSDSATNKK (285 aa). 246-257 is an AMP binding site; it reads YIYTSGTTGLPK.

The protein belongs to the ATP-dependent AMP-binding enzyme family. Self-associates. May function as a homodimer. Interacts with EPRS1; mediates the translocation of SLC27A1 from the cytoplasm to the plasma membrane thereby increasing the uptake of long-chain fatty acids. Interacts with DGAT2 and this interaction is enhanced in the presence of ZFYVE1. As to expression, expressed in muscle.

The protein localises to the cell membrane. It is found in the endomembrane system. Its subcellular location is the cytoplasm. The catalysed reaction is a fatty acid(in) = a fatty acid(out). It carries out the reaction (9Z)-octadecenoate(out) = (9Z)-octadecenoate(in). The enzyme catalyses hexadecanoate(out) = hexadecanoate(in). It catalyses the reaction (5Z,8Z,11Z,14Z)-eicosatetraenoate(out) = (5Z,8Z,11Z,14Z)-eicosatetraenoate(in). The catalysed reaction is (9Z,12Z)-octadecadienoate(out) = (9Z,12Z)-octadecadienoate(in). It carries out the reaction a long-chain fatty acid + ATP + CoA = a long-chain fatty acyl-CoA + AMP + diphosphate. The enzyme catalyses (5Z,8Z,11Z,14Z)-eicosatetraenoate + ATP + CoA = (5Z,8Z,11Z,14Z)-eicosatetraenoyl-CoA + AMP + diphosphate. It catalyses the reaction a very long-chain fatty acid + ATP + CoA = a very long-chain fatty acyl-CoA + AMP + diphosphate. The catalysed reaction is tetracosanoate + ATP + CoA = tetracosanoyl-CoA + AMP + diphosphate. Inhibited by Triacsin C. Its function is as follows. Mediates the import of long-chain fatty acids (LCFA) into the cell by facilitating their transport at the plasma membrane. Also functions as an acyl-CoA ligase catalyzing the ATP-dependent formation of fatty acyl-CoA using LCFA and very-long-chain fatty acids (VLCFA) as substrates, which prevents fatty acid efflux from cells and might drive more fatty acid uptake. May act directly as a bona fide transporter, or alternatively, in a cytoplasmic or membrane-associated multimeric protein complex to trap and draw fatty acids towards accumulation. Plays a pivotal role in regulating available LCFA substrates from exogenous sources in tissues undergoing high levels of beta-oxidation or triglyceride synthesis. May be involved in regulation of cholesterol metabolism. Probably involved in fatty acid transport across the blood barrier. In Rattus norvegicus (Rat), this protein is Long-chain fatty acid transport protein 1.